A 196-amino-acid polypeptide reads, in one-letter code: TGEKPFTCKECGKGFTQKRNLASHMTIHTGEKPFSCTECGKGFTQKRNLASHLTIHTGEKPFPCTECGKGFTQKSNLVSHMKIHTGEKPFTCTECGKEFAHKHRLLGHLKIHTGEKPFSCTECGKHFAHKYHLVSHMKIHTREKPFTCTECGEHFANKVSLLGHLKMHKGEKPFTCTECGNSFTQVSSLVSHMKIH.

C2H2-type zinc fingers lie at residues 6–28, 34–56, 62–84, 90–112, 118–140, 146–168, and 174–196; these read FTCKECGKGFTQKRNLASHMTIH, FSCTECGKGFTQKRNLASHLTIH, FPCTECGKGFTQKSNLVSHMKIH, FTCTECGKEFAHKHRLLGHLKIH, FSCTECGKHFAHKYHLVSHMKIH, FTCTECGEHFANKVSLLGHLKMH, and FTCTECGNSFTQVSSLVSHMKIH.

It belongs to the krueppel C2H2-type zinc-finger protein family.

Its subcellular location is the nucleus. Its function is as follows. May be involved in transcriptional regulation. The polypeptide is Gastrula zinc finger protein XlCGF8.2DB (Xenopus laevis (African clawed frog)).